Consider the following 118-residue polypeptide: Ribulose bisphosphate carboxylase small subunit (118 aa).

Belongs to the RuBisCO small chain family. In terms of assembly, heterohexadecamer of 8 large and 8 small subunits.

Functionally, ruBisCO catalyzes two reactions: the carboxylation of D-ribulose 1,5-bisphosphate, the primary event in carbon dioxide fixation, as well as the oxidative fragmentation of the pentose substrate. Both reactions occur simultaneously and in competition at the same active site. Although the small subunit is not catalytic it is essential for maximal activity. The chain is Ribulose bisphosphate carboxylase small subunit from Thiobacillus denitrificans (strain ATCC 25259 / T1).